The following is a 496-amino-acid chain: NADP-dependent glyceraldehyde-3-phosphate dehydrogenase (496 aa).

Substrate-binding positions include arginine 116 and 169 to 170; that span reads NY. NADP(+) is bound by residues lysine 192, threonine 195, and aspartate 230. NAD(+) is bound at residue 245–249; that stretch reads GGDTG. The active-site Proton acceptor is the glutamate 264. 297 to 299 provides a ligand contact to substrate; sequence RCT. Residue cysteine 298 is the Nucleophile of the active site. Glutamate 391 provides a ligand contact to NADP(+). At serine 404 the chain carries Phosphoserine. Arginine 451 is a substrate binding site.

This sequence belongs to the aldehyde dehydrogenase family. As to quaternary structure, interacts with 14-3-3 protein when phosphorylated. This interaction is released by divalent cations. In terms of processing, phosphorylated in shoots and non-photosynthetic tissues, but not in leaves.

It localises to the cytoplasm. The catalysed reaction is D-glyceraldehyde 3-phosphate + NADP(+) + H2O = (2R)-3-phosphoglycerate + NADPH + 2 H(+). With respect to regulation, insensitive to magnesium or calcium when dephosphorylated. When phosphorylated, 3-fold activation by magnesium or calcium, 2-fold activation by potassium, inhibited by ADP and AMP and insensitive to ATP or PPi. Its function is as follows. Important as a means of generating NADPH for biosynthetic reactions. In Triticum aestivum (Wheat), this protein is NADP-dependent glyceraldehyde-3-phosphate dehydrogenase (GAPN).